We begin with the raw amino-acid sequence, 201 residues long: Outer-membrane lipoprotein LolB (201 aa).

A signal peptide spans 1-18; sequence MKWCRLSIILMSLILLAG. The N-palmitoyl cysteine moiety is linked to residue C19. C19 carries S-diacylglycerol cysteine lipidation.

The protein belongs to the LolB family. Monomer.

It localises to the cell outer membrane. In terms of biological role, plays a critical role in the incorporation of lipoproteins in the outer membrane after they are released by the LolA protein. In Nitrosococcus oceani (strain ATCC 19707 / BCRC 17464 / JCM 30415 / NCIMB 11848 / C-107), this protein is Outer-membrane lipoprotein LolB.